The chain runs to 528 residues: uncharacterized protein (528 aa).

Residues 1–51 (MEHPKRPTPKNEALHIDASGRGESSFSVHRSHSGGHEPFAPSPGSSIGASV) are disordered. Repeat copies occupy residues 185–213 (EQEE…VKKY) and 285–313 (EQEQ…QQAL). A 2 X 29 AA repeats region spans residues 185 to 313 (EQEEEYISNS…EEKRKLQQAL (129 aa)). Disordered stretches follow at residues 467–497 (RAHG…NNDT) and 509–528 (TVHP…DSHY). Polar residues predominate over residues 472 to 496 (SPPTVVVQPSTSRAGSNSTANINND).

This is an uncharacterized protein from Caenorhabditis elegans.